A 675-amino-acid polypeptide reads, in one-letter code: Acetyl-coenzyme A synthetase 2 (675 aa).

CoA contacts are provided by residues 206–209 (RGGK) and Thr-325. ATP contacts are provided by residues 401-403 (GEP), 425-430 (DTMWQT), Asp-516, and Arg-531. Residue Ser-539 coordinates CoA. Residue Arg-542 participates in ATP binding. Residue Arg-604 participates in CoA binding.

The protein belongs to the ATP-dependent AMP-binding enzyme family.

The catalysed reaction is acetate + ATP + CoA = acetyl-CoA + AMP + diphosphate. The chain is Acetyl-coenzyme A synthetase 2 (ACS2) from Zygosaccharomyces bailii.